Here is an 871-residue protein sequence, read N- to C-terminus: MMQFQRDLEASLEAVSANAQELLKSLKSRKDVQDLNASLPKDPLDNCDAQTQAARAQLAEAATRILRLSIRPQEYLEHLQNGYQHLTCFRWLVELNILDHLPHSGTISYTDLARKASVPPMQLRSICRMAICNGFLEEPEANQVRHSRISALFARDESYLGWARWMVNYSVPAAYKLSDATRSWGETVAKDQTAFNLGMDVKVPFFDHLRQTPAMKDAFAAYMRNVTSNATWGLQHAVTGFDWASLPRGAKVVDVGGSLGHGSIAIAKEHTHLTFVIQDLPETVAGARKEMAQNDKIEASVKSRITFQEHDFFGPQTVKDADVYFLRMICHDWPDNEAKVILSQIRAALKPGAQIVIMDTILPQPGTTSVLQEQQLRIRDLTMMEVFNAKERELEDWSSLMQSAGLEISRVNQPLNSVMGLLTVRSAGQTALSGTNTLTPELVTAVSASTGSADSRPVLIAGAGIAGLCLAQALKKAGIDFRVFERDSHIDARPQGYRLKFEADAAQSLKNILPDDVYEAFELSNAVTAVGETDFNPFNGNIIHSRTGGGLSGKKGLYATFTVDRKAFRTQLMTGIEDKISFGKEIAYYKTDDSASTVTAEFKDGTHVTGSFLAGTDGLHSVVRKTCVPDHRIVDTGAACIYGKTVMTPEFLARFPEKGLRFMTVVSDIAPMLQSCLIGDSPVTLLLEPIRFSEASRARYPELPADYVYWALIGPKERFGSQEVTSMKNFVSLDQAAEQAAKLSLAVTEEWHPSLRALFELQDTKQASLIRVASTIPDIPSWESHSNVTVLGDSIHPMSPCGGVGANTAIVDADALAKVLVEHGTKPPVNAIAEFEAAMRTRAKRNIWRSEVGSKRMFGQKNLVDCSEFVF.

Residues 1–429 (MMQFQRDLEA…GLLTVRSAGQ (429 aa)) are O-methyltransferase. S-adenosyl-L-methionine is bound at residue aspartate 279. Residue histidine 331 is the Proton acceptor of the active site. An FAD-dependent monooxygenase region spans residues 430–871 (TALSGTNTLT…NLVDCSEFVF (442 aa)). Residues glutamate 485, arginine 569, aspartate 793, and alanine 806 each contribute to the FAD site.

In the C-terminal section; belongs to the paxM FAD-dependent monooxygenase family. It in the N-terminal section; belongs to the class I-like SAM-binding methyltransferase superfamily. Cation-independent O-methyltransferase family. COMT subfamily.

It carries out the reaction nor-toralactone + S-adenosyl-L-methionine = toralactone + S-adenosyl-L-homocysteine + H(+). It catalyses the reaction toralactone + NADH + O2 + H(+) = 1-(3,4,5-trihydroxy-7-methoxynaphthalen-2-yl)propan-2-one + CO2 + NAD(+). It participates in mycotoxin biosynthesis. Dual O-methyltransferase/FAD-dependent monooxygenase; part of the gene cluster that mediates the biosynthesis of cercosporin, a light-activated, non-host-selective toxin. The perylenequinone chromophore of cercosporin absorbs light energy to attain an electronically-activated triplet state and produces active oxygen species such as the hydroxyl radical, superoxide, hydrogen peroxide or singlet oxygen upon reaction with oxygen molecules. These reactive oxygen species cause damage to various cellular components including lipids, proteins and nucleic acids. The first step of cercosporin biosynthesis is performed by the polyketide synthase CTB1 which catalyzes the formation of nor-toralactone. The starter unit acyltransferase (SAT) domain of CTB1 initiates polyketide extension by the selective utilization of acetyl-CoA, which is elongated to the heptaketide in the beta-ketoacyl synthase (KS) domain by successive condensations with six malonyl units introduced by the malonyl acyltransferase (MAT) domain. The product template (PT) domain catalyzes C4-C9 and C2-C11 aldol cyclizations and dehydrations to a trihydroxynaphthalene, which is thought to be delivered to the thioesterase (TE) domain for product release. The bifunctional enzyme CTB3 then methylates nor-toralactone to toralactone before conducting an unusual oxidative aromatic ring opening. The O-methyltransferase CTB2 further methylates the nascent OH-6 of the CBT3 product, blocking further oxidation at this site before the reductase CTB6 reduces the 2-oxopropyl ketone at position C7, giving naphthalene. The FAD-dependent monooxygenase CTB5 in concert with the multicopper oxidase CTB12 are responsible for homodimerization of naphthalene with CTB7 installing the dioxepine moiety, finally producing cercosporin. The fasciclin domain-containing protein CTB11 might act with CTB5 and CTB12 whereas the roles of CTB9 and CTB10 have still to be elucidated. This is Dual O-methyltransferase/FAD-dependent monooxygenase CTB3 from Cercospora beticola (Sugarbeet leaf spot fungus).